Consider the following 365-residue polypeptide: DNA replication and repair protein RecF (365 aa).

30-37 (GQNGSGKT) is a binding site for ATP.

This sequence belongs to the RecF family.

The protein localises to the cytoplasm. In terms of biological role, the RecF protein is involved in DNA metabolism; it is required for DNA replication and normal SOS inducibility. RecF binds preferentially to single-stranded, linear DNA. It also seems to bind ATP. The protein is DNA replication and repair protein RecF of Shewanella woodyi (strain ATCC 51908 / MS32).